A 2332-amino-acid chain; its full sequence is Genome polyprotein (2332 aa).

A Peptidase C28 domain is found at 1 to 201; sequence MNTTDCFIAL…WKAKVQRKLK (201 aa). At 1–1480 the chain is on the cytoplasmic side; sequence MNTTDCFIAL…SFVKRAFKRL (1480 aa). Catalysis depends on for leader protease activity residues Cys51, His148, and Asp163. Disordered stretches follow at residues 197–218 and 238–265; these read QRKL…QSGN and QLGD…NTQN. Gly202 carries N-myristoyl glycine; by host lipidation. 2 stretches are compositionally biased toward polar residues: residues 204–218 and 238–251; these read GQSS…QSGN and QLGD…SNEG. Positions 252–265 are enriched in low complexity; the sequence is STDTTSTHTTNTQN. A disulfide bridge links Cys406 with Cys858. The antigenic epitope stretch occupies residues 788–796; the sequence is ALLRASTYY. The short motif at 869-871 is the Cell attachment site element; sequence RGD. Residues 1189–1353 enclose the SF3 helicase domain; that stretch reads NVHIANLCKV…DGYKINSKLD (165 aa). Residue 1217-1224 participates in ATP binding; sequence GKSGQGKS. Residues 1481 to 1501 lie within the membrane without spanning it; the sequence is KENFEIVALCLTLLANIVIMI. The Cytoplasmic portion of the chain corresponds to 1502–2332; the sequence is RETRKRQKMV…RWVNAVCGDA (831 aa). A compositionally biased stretch (basic and acidic residues) spans 1529–1538; that stretch reads KTLDEAEKSP. A disordered region spans residues 1529-1584; the sequence is KTLDEAEKSPLETSGASTVGFRERTLPGQKACDDVNSEPAQPVEEQPQAEGPYAGP. An O-(5'-phospho-RNA)-tyrosine mark is found at Tyr1581, Tyr1604, and Tyr1628. In terms of domain architecture, Peptidase C3 spans 1652-1848; it reads APPTDLQKMV…YCSCVSRSML (197 aa). The active-site For protease 3C activity; Proton donor/acceptor is His1695. Active-site for protease 3C activity residues include Asp1733 and Cys1812. Short sequence motifs (nuclear localization signal) lie at residues 1878–1886 and 1879–1886; these read MRKTKLAPT and RKTKLAPT. The RdRp catalytic domain occupies 2096–2214; that stretch reads RNVWDVDYSA…ASDYDLDFEA (119 aa). Asp2200 functions as the For RdRp activity in the catalytic mechanism.

This sequence belongs to the picornaviruses polyprotein family. In terms of assembly, interacts with host ISG15. As to quaternary structure, interacts (via R-G-D motif) with host ITGAV/ITGB6. Interacts with host MAVS; this interaction inhibits binding of host TRAF3 to MAVS, thereby suppressing interferon-mediated responses. Forms homooligomers. In terms of assembly, homohexamer. Interacts with host VIM. Interacts with host BECN1. As to quaternary structure, interacts with host DCTN3. Interacts with RNA-dependent RNA polymerase; this interaction allows 3B-1 to binds 2 polymerases and act as a primer. It also allows the recruitment of the RNA-dependent RNA polymerase to host membranes. In terms of assembly, interacts with RNA-dependent RNA polymerase; this interaction allows 3B-2 to act as a primer. As to quaternary structure, interacts with RNA-dependent RNA polymerase; this interaction allows 3B-3 to act as a primer. Interacts with 3B-1; this interaction allows 3B-1 to binds 2 polymerases and act as a primer. It also allows the recruitment of the RNA-dependent RNA polymerase to host membranes. Interacts with 3B-2; this interaction allows 3B-2 to act as a primer. Interacts with 3B-3; this interaction allows 3B-3 to act as a primer. Removes six residues from its own C-terminus, generating sLb(pro). Post-translationally, specific enzymatic cleavages in vivo by the viral proteases yield a variety of precursors and mature proteins. The polyprotein seems to be cotranslationally cleaved at the 2A/2B junction by a ribosomal skip from one codon to the next without formation of a peptide bond. This process would release the L-P1-2A peptide from the translational complex. In terms of processing, during virion maturation, immature virions are rendered infectious following cleavage of VP0 into VP4 and VP2. This maturation seems to be an autocatalytic event triggered by the presence of RNA in the capsid and is followed by a conformational change of the particle. Myristoylation is required during RNA encapsidation and formation of the mature virus particle. Post-translationally, uridylylated by the polymerase and covalently linked to the 5'-end of genomic RNA. These uridylylated forms act as a nucleotide-peptide primer for the polymerase. In terms of processing, the disulfide bond between VP1 and VP2 occurs after release of virus from the host cell.

Its subcellular location is the host nucleus. The protein resides in the host cytoplasm. It localises to the virion. It is found in the host endoplasmic reticulum membrane. The protein localises to the host cytoplasmic vesicle membrane. It carries out the reaction Autocatalytically cleaves itself from the polyprotein of the foot-and-mouth disease virus by hydrolysis of a Lys-|-Gly bond, but then cleaves host cell initiation factor eIF-4G at bonds -Gly-|-Arg- and -Lys-|-Arg-.. It catalyses the reaction a ribonucleoside 5'-triphosphate + H2O = a ribonucleoside 5'-diphosphate + phosphate + H(+). The catalysed reaction is RNA(n) + a ribonucleoside 5'-triphosphate = RNA(n+1) + diphosphate. The enzyme catalyses Selective cleavage of Gln-|-Gly bond in the poliovirus polyprotein. In other picornavirus reactions Glu may be substituted for Gln, and Ser or Thr for Gly.. Functionally, autocatalytically cleaves itself from the polyprotein at the L/VP0 junction. Also cleaves the host translation initiation factors EIF4G1 and EIF4G3, in order to shut off the capped cellular mRNA transcription. Plays a role in counteracting host innate antiviral response using diverse mechanisms. Possesses a deubiquitinase activity acting on both 'Lys-48' and 'Lys-63'-linked polyubiquitin chains. In turn, inhibits the ubiquitination and subsequent activation of key signaling molecules of type I IFN response such as host RIGI, TBK1, TRAF3 and TRAF6. Inhibits host NF-kappa-B activity by inducing a decrease in RELA mRNA levels. Cleaves a peptide bond in the C-terminus of host ISG15, resulting in the damaging of this modifier that can no longer be attached to target proteins. Also cleaves host G3BP1 and G3BP2 in order to inhibit cytoplasmic stress granules assembly. Lies on the inner surface of the capsid shell. After binding to the host receptor, the capsid undergoes conformational changes. Capsid protein VP4 is released, capsid protein VP1 N-terminus is externalized, and together, they shape a pore in the host membrane through which the viral genome is translocated into the host cell cytoplasm. After genome has been released, the channel shrinks. In terms of biological role, forms an icosahedral capsid of pseudo T=3 symmetry with capsid proteins VP1 and VP3. The capsid is composed of 60 copies of each capsid protein organized in the form of twelve pentamers and encloses the viral positive strand RNA genome. Upon acidifcation in the endosome, dissociates into pentamers. Its function is as follows. Forms an icosahedral capsid of pseudo T=3 symmetry with capsid proteins VP2 and VP3. The capsid is composed of 60 copies of each capsid protein organized in the form of twelve pentamers and encloses the viral positive strand RNA genome. Mediates cell entry by attachment to an integrin receptor, usually host ITGAV/ITGB6, via a conserved arginine-glycine-aspartic acid (R-G-D) motif. In addition, targets host MAVS to suppress type I IFN pathway. Upon acidifcation in the endosome, dissociates into pentamers. Functionally, forms an icosahedral capsid of pseudo T=3 symmetry with capsid proteins VP0 and VP3. The capsid is composed of 60 copies of each capsid protein organized in the form of twelve pentamers and encloses the viral positive strand RNA genome. Upon acidifcation in the endosome, dissociates into pentamers. Mediates self-processing of the polyprotein by a translational effect termed 'ribosome skipping'. Mechanistically, 2A-mediated cleavage occurs between the C-terminal glycine and the proline of the downstream protein 2B. In the case of foot-and-mouth disease virus, the 2A oligopeptide is post-translationally 'trimmed' from the C-terminus of the upstream protein 1D by 3C proteinase. In terms of biological role, plays an essential role in the virus replication cycle by acting as a viroporin. Creates a pore in the host endoplasmic reticulum and as a consequence releases Ca2+ in the cytoplasm of infected cell. In turn, high levels of cytoplasmic calcium may trigger membrane trafficking and transport of viral ER-associated proteins to viroplasms, sites of viral genome replication. Its function is as follows. Associates with and induces structural rearrangements of intracellular membranes. Triggers host autophagy by interacting with host BECN1 and thereby promotes viral replication. Participates in viral replication and interacts with host DHX9. Displays RNA-binding, nucleotide binding and NTPase activities. May play a role in virion morphogenesis and viral RNA encapsidation by interacting with the capsid protein VP3. Functionally, plays important roles in virus replication, virulence and host range. Cooperates with host DDX56 to inhibit IRF3 nuclear translocation and subsequent type I interferon production. Covalently linked to the 5'-end of both the positive-strand and negative-strand genomic RNAs. Acts as a genome-linked replication primer. In terms of biological role, cysteine protease that generates mature viral proteins from the precursor polyprotein. In addition to its proteolytic activity, binds to viral RNA and thus influences viral genome replication. RNA and substrate bind cooperatively to the protease. Its function is as follows. RNA-directed RNA polymerase 3D-POL replicates genomic and antigenomic RNA by recognizing replications specific signals. Covalently attaches UMP to a tyrosine of VPg, which is used to prime RNA synthesis. The positive stranded RNA genome is first replicated at virus induced membranous vesicles, creating a dsRNA genomic replication form. This dsRNA is then used as template to synthesize positive stranded RNA genomes. ss(+)RNA genomes are either translated, replicated or encapsidated. The chain is Genome polyprotein from Bos taurus (Bovine).